The chain runs to 473 residues: Putative malate dehydrogenase 1B (473 aa).

It belongs to the LDH/MDH superfamily. MDH type 2 family.

The protein is Putative malate dehydrogenase 1B (MDH1B) of Bos taurus (Bovine).